A 288-amino-acid polypeptide reads, in one-letter code: MTDRWLVTGAAGMLGRDLVALLRGLNEPVVAITRHDLDITDRLSVRAVVDRHRPTTIVNCAAWTRFGEAEAGESAALLVNGGGARELAAVCRDRSIRLVHLSTDYVFDGTSRRPYAESAVTSPINAYGRTKQAGEQAVLDLLPDDGTIVRTAWLYGRHGMNFIRKMVRLEQLRETVDVVDDQWGQPTWTVDLAQQIVALVRHGASGVFHGTSAGEATWYDLARMTFRLLGADPGRVRPVPSDRIAGGELRPRYTVLGHDAWREAGLTPIRHWTTALTQAFPLLNADES.

Residues 12 to 14 (GML), 38 to 39 (DI), 62 to 64 (AWT), Tyr127, and Lys131 each bind NADH. NADPH-binding positions include 13 to 14 (ML), 38 to 39 (DI), 62 to 64 (AWT), Tyr127, and Lys131. The active-site Proton donor/acceptor is the Tyr127.

Belongs to the dTDP-4-dehydrorhamnose reductase family. It depends on Mg(2+) as a cofactor.

Its pathway is antibiotic biosynthesis; novobiocin biosynthesis. In terms of biological role, reduces the product formed from the reaction of NovW with dTDP-4-keto-6-deoxy-D-glucose to result in dTDP-5-methyl-L-rhamnose in the novobiocin biosynthesis pathway, an aminocoumarin family antibiotic that targets bacterial DNA gyrases. In Streptomyces niveus (Streptomyces spheroides), this protein is dTDP-4-keto-6-deoxy-D-glucose reductase (novS).